The following is a 609-amino-acid chain: Protein kinase PVPK-1 (609 aa).

The segment covering 1 to 19 (MESSVNGVDSLSEVQNSVS) has biased composition (polar residues). 2 disordered regions span residues 1–51 (MESS…GHQT) and 80–100 (PTKLSSKQPPLDDSKGCEPNG). The region spanning 229–565 (FRLLKKLGCG…ATEIKQHPFF (337 aa)) is the Protein kinase domain. ATP contacts are provided by residues 235 to 243 (LGCGDIGSV) and K258. D354 (proton acceptor) is an active-site residue. The disordered stretch occupies residues 429 to 448 (GKSKKDKKSKPKNDMHNQVT).

Belongs to the protein kinase superfamily. Ser/Thr protein kinase family.

The enzyme catalyses L-seryl-[protein] + ATP = O-phospho-L-seryl-[protein] + ADP + H(+). It catalyses the reaction L-threonyl-[protein] + ATP = O-phospho-L-threonyl-[protein] + ADP + H(+). This chain is Protein kinase PVPK-1, found in Phaseolus vulgaris (Kidney bean).